The following is a 1225-amino-acid chain: Catenin delta-2 (1225 aa).

Disordered regions lie at residues 1–51 (MFAR…TSAI), 87–117 (SETG…EDEL), 134–242 (SGIL…HLPD), and 256–312 (SSTL…KSYS). Composition is skewed to polar residues over residues 20–51 (QPSS…TSAI) and 98–108 (AEEQFQWQSQD). A coiled-coil region spans residues 49–84 (SAILASVKEQELQFERLTRELEAERQIVASQLERCK). A compositionally biased stretch (low complexity) spans 149 to 160 (SLLSQSALQLNS). Polar residues-rich tracts occupy residues 172-187 (YHSN…TPSQ) and 195-209 (ARAT…TTSR). Arginine 209 is modified (omega-N-methylarginine). Over residues 217-229 (EPAPPPPPPPREP) the composition is skewed to pro residues. Arginine 264 carries the omega-N-methylarginine modification. Phosphoserine is present on residues serine 267 and serine 276. Omega-N-methylarginine occurs at positions 282 and 296. Positions 299–312 (SPKQSPSRLAKSYS) are enriched in polar residues. 4 positions are modified to phosphoserine: serine 327, serine 360, serine 415, and serine 461. Residues 394 to 438 (GSRASYSSQHGHLGPELRALQSPEHHIDPIYEDRVYQKPPMRSLS) form an ARM 1 repeat. 2 disordered regions span residues 432-483 (PPMR…NAAA) and 514-542 (SPYS…QKDP). A compositionally biased stretch (polar residues) spans 469–478 (LQRTGSQHGP). Phosphoserine is present on serine 514. Position 516 is a phosphotyrosine (tyrosine 516). 8 ARM repeats span residues 540–579 (KDPR…HLCF), 582–621 (NKIK…NLVY), 626–666 (DDNK…NLSS), 682–724 (LTNA…NVSS), 728–773 (EARR…NLSY), 835–875 (PKGI…NLAA), 882–921 (VYIR…NMAL), and 975–1018 (MENA…SMWQ). The tract at residues 1042-1077 (TIERDRQRPYSSSRTPSISPVRVSPNNRSASAPASP) is disordered. Residues 1050–1059 (PYSSSRTPSI) are compositionally biased toward polar residues. Residues serine 1065 and serine 1076 each carry the phosphoserine modification. Positions 1065–1077 (SPNNRSASAPASP) are enriched in low complexity.

This sequence belongs to the beta-catenin family. Binds to E-cadherin at a juxtamembrane site within the cytoplasmic domain. Interacts with PDZD2. Interacts with ZBTB33. Binds to PSEN1. Interacts with ARHGEF28. Interacts (via the extreme C-terminus) with FRMPD2 (via the PDZ 2 domain). Interacts with CDK5. Interacts with CTNNB1. Interacts with GSK3A and GSK3B. Interacts with DNM2. Interacts with CCDC85B. In terms of processing, O-glycosylated. Post-translationally, phosphorylated by CDK5. Phosphorylated by GSK3B. As to expression, expressed in brain; highest expression is observed in fetal brain.

The protein resides in the nucleus. Its subcellular location is the cell junction. It is found in the adherens junction. It localises to the cell projection. The protein localises to the dendrite. The protein resides in the perikaryon. Has a critical role in neuronal development, particularly in the formation and/or maintenance of dendritic spines and synapses. Involved in the regulation of Wnt signaling. It probably acts on beta-catenin turnover, facilitating beta-catenin interaction with GSK3B, phosphorylation, ubiquitination and degradation. Functions as a transcriptional activator when bound to ZBTB33. May be involved in neuronal cell adhesion and tissue morphogenesis and integrity by regulating adhesion molecules. The polypeptide is Catenin delta-2 (CTNND2) (Homo sapiens (Human)).